We begin with the raw amino-acid sequence, 311 residues long: F-box protein At3g18320 (311 aa).

An F-box domain is found at Met-1–Lys-46.

In Arabidopsis thaliana (Mouse-ear cress), this protein is F-box protein At3g18320.